Here is a 364-residue protein sequence, read N- to C-terminus: DNA polymerase IV (364 aa).

Residues 14-198 (IIHIDMDAFF…LPIEKFHGVG (185 aa)) form the UmuC domain. Mg(2+) contacts are provided by aspartate 18 and aspartate 116. Glutamate 117 is an active-site residue.

Belongs to the DNA polymerase type-Y family. As to quaternary structure, monomer. Requires Mg(2+) as cofactor.

It is found in the cytoplasm. It catalyses the reaction DNA(n) + a 2'-deoxyribonucleoside 5'-triphosphate = DNA(n+1) + diphosphate. Poorly processive, error-prone DNA polymerase involved in untargeted mutagenesis. Copies undamaged DNA at stalled replication forks, which arise in vivo from mismatched or misaligned primer ends. These misaligned primers can be extended by PolIV. Exhibits no 3'-5' exonuclease (proofreading) activity. May be involved in translesional synthesis, in conjunction with the beta clamp from PolIII. In Streptococcus pyogenes serotype M5 (strain Manfredo), this protein is DNA polymerase IV.